We begin with the raw amino-acid sequence, 190 residues long: Probable DNA replication complex GINS protein PSF2 (190 aa).

It belongs to the GINS2/PSF2 family. As to quaternary structure, component of the GINS complex which is a heterotetramer of gins1, gins2, gins3 and gins4.

Its subcellular location is the nucleus. The GINS complex plays an essential role in the initiation of DNA replication. The polypeptide is Probable DNA replication complex GINS protein PSF2 (Brugia malayi (Filarial nematode worm)).